The sequence spans 1330 residues: G2/mitotic-specific cyclin-B3 (1330 aa).

The disordered stretch occupies residues 1-50 (MPLPLPSRSSKPETKKSRSSKIVPSGNNGQSEKRGENYQEKISSSSPRRL). Positions 20 to 30 (SKIVPSGNNGQ) are enriched in polar residues. Residues 54–62 (RSAFEDLTN) carry the D-box motif. The tract at residues 1002–1059 (VETSSRVPSTPPESRAGMSSVGKLSTTSKSSVCESSSNKPSSSWGESSQKEMTPLEDI) is disordered. Low complexity predominate over residues 1026–1048 (STTSKSSVCESSSNKPSSSWGES).

This sequence belongs to the cyclin family. Cyclin AB subfamily. Interacts with CDK2 kinase. Ubiquitinated. Ubiquitination leads to its degradation during anaphase entry, after degradation of CCNB1.

Its subcellular location is the nucleus. Functionally, cyclins are positive regulatory subunits of the cyclin-dependent kinases (CDKs), and thereby play an essential role in the control of the cell cycle, notably via their destruction during cell division. Its tissue specificity suggest that it may be required during early meiotic prophase I. This is G2/mitotic-specific cyclin-B3 (CCNB3) from Canis lupus familiaris (Dog).